The chain runs to 362 residues: Chorismate synthase (362 aa).

Arg47 is a binding site for NADP(+). FMN contacts are provided by residues 124 to 126 (RSS), Gly286, 301 to 305 (KPTAT), and Arg327.

Belongs to the chorismate synthase family. As to quaternary structure, homotetramer. FMNH2 serves as cofactor.

The catalysed reaction is 5-O-(1-carboxyvinyl)-3-phosphoshikimate = chorismate + phosphate. It functions in the pathway metabolic intermediate biosynthesis; chorismate biosynthesis; chorismate from D-erythrose 4-phosphate and phosphoenolpyruvate: step 7/7. In terms of biological role, catalyzes the anti-1,4-elimination of the C-3 phosphate and the C-6 proR hydrogen from 5-enolpyruvylshikimate-3-phosphate (EPSP) to yield chorismate, which is the branch point compound that serves as the starting substrate for the three terminal pathways of aromatic amino acid biosynthesis. This reaction introduces a second double bond into the aromatic ring system. The polypeptide is Chorismate synthase (Rippkaea orientalis (strain PCC 8801 / RF-1) (Cyanothece sp. (strain PCC 8801))).